The sequence spans 474 residues: Bifunctional protein HldE (474 aa).

Residues 1-318 (MKLSMPRFDQ…RAIQREEGSE (318 aa)) form a ribokinase region. 194–197 (NLSE) serves as a coordination point for ATP. The active site involves Asp-263. A cytidylyltransferase region spans residues 343–474 (FTNGCFDILH…AIVEKIRGQG (132 aa)).

The protein in the N-terminal section; belongs to the carbohydrate kinase PfkB family. This sequence in the C-terminal section; belongs to the cytidylyltransferase family. In terms of assembly, homodimer.

The enzyme catalyses D-glycero-beta-D-manno-heptose 7-phosphate + ATP = D-glycero-beta-D-manno-heptose 1,7-bisphosphate + ADP + H(+). It catalyses the reaction D-glycero-beta-D-manno-heptose 1-phosphate + ATP + H(+) = ADP-D-glycero-beta-D-manno-heptose + diphosphate. The protein operates within nucleotide-sugar biosynthesis; ADP-L-glycero-beta-D-manno-heptose biosynthesis; ADP-L-glycero-beta-D-manno-heptose from D-glycero-beta-D-manno-heptose 7-phosphate: step 1/4. It participates in nucleotide-sugar biosynthesis; ADP-L-glycero-beta-D-manno-heptose biosynthesis; ADP-L-glycero-beta-D-manno-heptose from D-glycero-beta-D-manno-heptose 7-phosphate: step 3/4. Catalyzes the phosphorylation of D-glycero-D-manno-heptose 7-phosphate at the C-1 position to selectively form D-glycero-beta-D-manno-heptose-1,7-bisphosphate. Functionally, catalyzes the ADP transfer from ATP to D-glycero-beta-D-manno-heptose 1-phosphate, yielding ADP-D-glycero-beta-D-manno-heptose. This Pseudomonas syringae pv. syringae (strain B728a) protein is Bifunctional protein HldE.